A 210-amino-acid polypeptide reads, in one-letter code: NADH dehydrogenase [ubiquinone] iron-sulfur protein 8, mitochondrial (210 aa).

A mitochondrion-targeting transit peptide spans 1-34 (MRCLTTPVLLRALAQAARAGPPGGRSLHSSAVAA). 4Fe-4S ferredoxin-type domains lie at 102-131 (RRYP…IEAE) and 141-170 (TRYD…EGPN). The [4Fe-4S] cluster site is built by C111, C114, C117, C121, C150, C153, C156, and C160.

The protein belongs to the complex I 23 kDa subunit family. In terms of assembly, core subunit of respiratory chain NADH dehydrogenase (Complex I) which is composed of 45 different subunits. This is a component of the iron-sulfur (IP) fragment of the enzyme. Interacts with RAB5IF. Requires [4Fe-4S] cluster as cofactor.

Its subcellular location is the mitochondrion inner membrane. It carries out the reaction a ubiquinone + NADH + 5 H(+)(in) = a ubiquinol + NAD(+) + 4 H(+)(out). Core subunit of the mitochondrial membrane respiratory chain NADH dehydrogenase (Complex I) which catalyzes electron transfer from NADH through the respiratory chain, using ubiquinone as an electron acceptor. Essential for the catalytic activity and assembly of complex I. In Gorilla gorilla gorilla (Western lowland gorilla), this protein is NADH dehydrogenase [ubiquinone] iron-sulfur protein 8, mitochondrial (NDUFS8).